A 304-amino-acid chain; its full sequence is Non-specific ribonucleoside hydrolase RihC (304 aa).

The active site involves His233.

It belongs to the IUNH family. RihC subfamily.

In terms of biological role, hydrolyzes both purine and pyrimidine ribonucleosides with a broad-substrate specificity. This is Non-specific ribonucleoside hydrolase RihC from Shigella dysenteriae serotype 1 (strain Sd197).